A 393-amino-acid chain; its full sequence is NAD(P)H-quinone oxidoreductase subunit H, chloroplastic (393 aa).

The protein belongs to the complex I 49 kDa subunit family. As to quaternary structure, NDH is composed of at least 16 different subunits, 5 of which are encoded in the nucleus.

Its subcellular location is the plastid. It is found in the chloroplast thylakoid membrane. The enzyme catalyses a plastoquinone + NADH + (n+1) H(+)(in) = a plastoquinol + NAD(+) + n H(+)(out). It carries out the reaction a plastoquinone + NADPH + (n+1) H(+)(in) = a plastoquinol + NADP(+) + n H(+)(out). Its function is as follows. NDH shuttles electrons from NAD(P)H:plastoquinone, via FMN and iron-sulfur (Fe-S) centers, to quinones in the photosynthetic chain and possibly in a chloroplast respiratory chain. The immediate electron acceptor for the enzyme in this species is believed to be plastoquinone. Couples the redox reaction to proton translocation, and thus conserves the redox energy in a proton gradient. The polypeptide is NAD(P)H-quinone oxidoreductase subunit H, chloroplastic (Draba nemorosa (Woodland whitlowgrass)).